The following is an 817-amino-acid chain: LPS-assembly protein LptD (817 aa).

The first 26 residues, 1–26 (MPALVVSPDLVRGAAGASAAPTPAPA), serve as a signal peptide directing secretion. Positions 1-101 (MPALVVSPDL…ARKPGSTEVR (101 aa)) are disordered. Residues 13–90 (GAAGASAAPT…PAASASPADA (78 aa)) show a composition bias toward low complexity.

It belongs to the LptD family. As to quaternary structure, component of the lipopolysaccharide transport and assembly complex. Interacts with LptE and LptA.

The protein resides in the cell outer membrane. Functionally, together with LptE, is involved in the assembly of lipopolysaccharide (LPS) at the surface of the outer membrane. This chain is LPS-assembly protein LptD, found in Azoarcus sp. (strain BH72).